Here is a 960-residue protein sequence, read N- to C-terminus: Endoplasmic reticulum aminopeptidase 2 (960 aa).

The Cytoplasmic portion of the chain corresponds to 1–20 (MFHSSAMVNSHRKPMFNIHR). A helical; Signal-anchor for type II membrane protein membrane pass occupies residues 21-40 (GFYCLTAILPQICICSQFSV). The Lumenal segment spans residues 41–960 (PSSYHFTEDP…TLRTWLMVNT (920 aa)). Asn85 and Asn119 each carry an N-linked (GlcNAc...) asparagine glycan. Glu200 contributes to the substrate binding site. Asn219 carries N-linked (GlcNAc...) asparagine glycosylation. 334-338 (GAMEN) provides a ligand contact to substrate. His370 provides a ligand contact to Zn(2+). The active-site Proton acceptor is Glu371. Residues His374 and Glu393 each contribute to the Zn(2+) site. Residue Asn405 is glycosylated (N-linked (GlcNAc...) asparagine). Residues Cys421 and Cys460 are joined by a disulfide bond. N-linked (GlcNAc...) asparagine glycosylation is present at Asn650. Cys759 and Cys766 are oxidised to a cystine.

It belongs to the peptidase M1 family. Heterodimer with ERAP1. Zn(2+) is required as a cofactor. In terms of processing, N-glycosylated. As to expression, ubiquitously expressed. Highly expressed in spleen and leukocytes.

It is found in the endoplasmic reticulum membrane. Functionally, aminopeptidase that plays a central role in peptide trimming, a step required for the generation of most HLA class I-binding peptides. Peptide trimming is essential to customize longer precursor peptides to fit them to the correct length required for presentation on MHC class I molecules. Preferentially hydrolyzes the basic residues Arg and Lys. This is Endoplasmic reticulum aminopeptidase 2 (ERAP2) from Homo sapiens (Human).